We begin with the raw amino-acid sequence, 364 residues long: D-alanine--D-alanine ligase A (364 aa).

The region spanning 145–348 (KRLLRDAGLN…YTDLITRLIE (204 aa)) is the ATP-grasp domain. Residue 175–230 (ESKLGLPLFVKPANQGSSVGVSKVTSEEQYAIAVDLAFEFDHKVIVEQGIKGREIE) participates in ATP binding. Mg(2+)-binding residues include Asp302, Glu315, and Asn317.

This sequence belongs to the D-alanine--D-alanine ligase family. Mg(2+) serves as cofactor. Requires Mn(2+) as cofactor.

It localises to the cytoplasm. It carries out the reaction 2 D-alanine + ATP = D-alanyl-D-alanine + ADP + phosphate + H(+). The protein operates within cell wall biogenesis; peptidoglycan biosynthesis. In terms of biological role, cell wall formation. The sequence is that of D-alanine--D-alanine ligase A (ddlA) from Escherichia coli O157:H7.